The sequence spans 101 residues: Large ribosomal subunit protein uL23 (101 aa).

Belongs to the universal ribosomal protein uL23 family. In terms of assembly, part of the 50S ribosomal subunit. Contacts protein L29, and trigger factor when it is bound to the ribosome.

In terms of biological role, one of the early assembly proteins it binds 23S rRNA. One of the proteins that surrounds the polypeptide exit tunnel on the outside of the ribosome. Forms the main docking site for trigger factor binding to the ribosome. The protein is Large ribosomal subunit protein uL23 of Nocardia farcinica (strain IFM 10152).